The following is a 209-amino-acid chain: Large ribosomal subunit protein uL3 (209 aa).

The tract at residues 130–162 is disordered; the sequence is RGPMTHGSKFKRAPGSMGASSDPSRTFKNKRMP.

It belongs to the universal ribosomal protein uL3 family. In terms of assembly, part of the 50S ribosomal subunit. Forms a cluster with proteins L14 and L19.

One of the primary rRNA binding proteins, it binds directly near the 3'-end of the 23S rRNA, where it nucleates assembly of the 50S subunit. The polypeptide is Large ribosomal subunit protein uL3 (Clostridium botulinum (strain Alaska E43 / Type E3)).